A 158-amino-acid chain; its full sequence is UPF0262 protein RHOS4_22360 (158 aa).

It belongs to the UPF0262 family.

The protein is UPF0262 protein RHOS4_22360 of Cereibacter sphaeroides (strain ATCC 17023 / DSM 158 / JCM 6121 / CCUG 31486 / LMG 2827 / NBRC 12203 / NCIMB 8253 / ATH 2.4.1.) (Rhodobacter sphaeroides).